We begin with the raw amino-acid sequence, 237 residues long: Proteasome subunit beta 2 (237 aa).

Positions 1–14 are enriched in polar residues; sequence MNNWSQGSTPQGSD. Residues 1–42 constitute a propeptide, removed in mature form; by autocatalysis; the sequence is MNNWSQGSTPQGSDPSPYAPELGSLPDGSQSDDHGDTVNKTG. The segment at 1-45 is disordered; it reads MNNWSQGSTPQGSDPSPYAPELGSLPDGSQSDDHGDTVNKTGTTT. Residue threonine 43 is the Nucleophile of the active site.

Belongs to the peptidase T1B family. As to quaternary structure, the 20S proteasome core is composed of 14 alpha and 14 beta subunits that assemble into four stacked heptameric rings, resulting in a barrel-shaped structure. The two inner rings, each composed of seven catalytic beta subunits, are sandwiched by two outer rings, each composed of seven alpha subunits. The catalytic chamber with the active sites is on the inside of the barrel. Has a gated structure, the ends of the cylinder being occluded by the N-termini of the alpha-subunits. Is capped at one or both ends by the proteasome regulatory ATPase, PAN.

The protein localises to the cytoplasm. It carries out the reaction Cleavage of peptide bonds with very broad specificity.. The formation of the proteasomal ATPase PAN-20S proteasome complex, via the docking of the C-termini of PAN into the intersubunit pockets in the alpha-rings, triggers opening of the gate for substrate entry. Interconversion between the open-gate and close-gate conformations leads to a dynamic regulation of the 20S proteasome proteolysis activity. Functionally, component of the proteasome core, a large protease complex with broad specificity involved in protein degradation. The chain is Proteasome subunit beta 2 from Haloterrigena turkmenica (strain ATCC 51198 / DSM 5511 / JCM 9101 / NCIMB 13204 / VKM B-1734 / 4k) (Halococcus turkmenicus).